A 525-amino-acid chain; its full sequence is GMP synthase [glutamine-hydrolyzing] (525 aa).

In terms of domain architecture, Glutamine amidotransferase type-1 spans 8–206 (PLLILDFGSQ…VVDICKASTD (199 aa)). Catalysis depends on C85, which acts as the Nucleophile. Residues H180 and E182 contribute to the active site. Residues 207-400 (WTPEHIIDEA…LGLPHDMVYR (194 aa)) form the GMPS ATP-PPase domain. Residue 234 to 240 (SGGVDSS) participates in ATP binding.

As to quaternary structure, homodimer.

It carries out the reaction XMP + L-glutamine + ATP + H2O = GMP + L-glutamate + AMP + diphosphate + 2 H(+). It functions in the pathway purine metabolism; GMP biosynthesis; GMP from XMP (L-Gln route): step 1/1. Functionally, catalyzes the synthesis of GMP from XMP. The polypeptide is GMP synthase [glutamine-hydrolyzing] (Legionella pneumophila (strain Paris)).